We begin with the raw amino-acid sequence, 173 residues long: MSDQQQQQPGQDGQPFFNIQRVYLKDLSLEQPNSPHIFLEQEQPTVEVQVDVAATQLAEGVFEVTVIGTVTTKVKEKVAFLVEAKQAGIFDIRNVPVEQMDPLLGIACPTIVYPYLRSNIADTIGRAGFQPIHLAEINFQALYEQRLASAMEEAQAAGGNGGIVMPDGSKATH.

This sequence belongs to the SecB family. In terms of assembly, homotetramer, a dimer of dimers. One homotetramer interacts with 1 SecA dimer.

It is found in the cytoplasm. One of the proteins required for the normal export of preproteins out of the cell cytoplasm. It is a molecular chaperone that binds to a subset of precursor proteins, maintaining them in a translocation-competent state. It also specifically binds to its receptor SecA. This chain is Protein-export protein SecB, found in Ralstonia nicotianae (strain ATCC BAA-1114 / GMI1000) (Ralstonia solanacearum).